Here is a 969-residue protein sequence, read N- to C-terminus: Probable Rho-type GTPase-activating protein 3 (969 aa).

LIM zinc-binding domains are found at residues 17-81 (TVCF…CTAC) and 76-135 (HTCT…RHPS). Disordered regions lie at residues 170–223 (IEIM…ADSL), 348–459 (ATSP…VEEL), and 613–646 (TSSK…SPNL). Residues 193-202 (ETPTNMSQAE) are compositionally biased toward polar residues. Low complexity-rich tracts occupy residues 212 to 223 (DSNLASNSADSL) and 350 to 361 (SPFRPFSPSYRS). Polar residues-rich tracts occupy residues 369-392 (TRSP…SFAQ) and 418-432 (LSET…SLGS). The segment covering 450-459 (SERDSDVEEL) has biased composition (basic and acidic residues). Residues 613–623 (TSSKNTTSSIN) are compositionally biased toward low complexity. Over residues 624–637 (PLTAVSSNSGQSSG) the composition is skewed to polar residues. The Phorbol-ester/DAG-type zinc-finger motif lies at 697 to 744 (DHVFHVNAIFKPSRCYICSESVWGSELRCFHCSISCHSRCLKRLFAES). The Rho-GAP domain occupies 780-966 (RSLENQLKIE…FMLDNVDKIL (187 aa)).

Interacts with dil1.

The protein resides in the cell tip. Its function is as follows. GTPase-activating protein for Rho-type proteins. The protein is Probable Rho-type GTPase-activating protein 3 (rga3) of Schizosaccharomyces pombe (strain 972 / ATCC 24843) (Fission yeast).